A 750-amino-acid polypeptide reads, in one-letter code: Coiled-coil domain-containing protein 142 (750 aa).

The segment at 1–29 (MAQASRSGSLPPLVIVPPLRAQPGGTGEE) is disordered. Residues 87 to 110 (ALQRLRAVLLRLHREREQLLQARD) adopt a coiled-coil conformation. The segment at 687 to 714 (LEPPLQPGTSPAQTGQLQSTLGGRGPSP) is disordered. The span at 693-707 (PGTSPAQTGQLQSTL) shows a compositional bias: polar residues.

The chain is Coiled-coil domain-containing protein 142 (CCDC142) from Homo sapiens (Human).